A 522-amino-acid chain; its full sequence is Light-independent protochlorophyllide reductase subunit B (522 aa).

D36 lines the [4Fe-4S] cluster pocket. D274 functions as the Proton donor in the catalytic mechanism. 409–410 (GL) is a substrate binding site. The segment at 426 to 464 (DEAGPSHHGGKAVPASAPRAEATADEGSTPEEAVPPVAA) is disordered. A compositionally biased stretch (low complexity) spans 455 to 464 (PEEAVPPVAA).

The protein belongs to the ChlB/BchB/BchZ family. As to quaternary structure, protochlorophyllide reductase is composed of three subunits; BchL, BchN and BchB. Forms a heterotetramer of two BchB and two BchN subunits. The cofactor is [4Fe-4S] cluster.

The enzyme catalyses chlorophyllide a + oxidized 2[4Fe-4S]-[ferredoxin] + 2 ADP + 2 phosphate = protochlorophyllide a + reduced 2[4Fe-4S]-[ferredoxin] + 2 ATP + 2 H2O. It participates in porphyrin-containing compound metabolism; bacteriochlorophyll biosynthesis (light-independent). Functionally, component of the dark-operative protochlorophyllide reductase (DPOR) that uses Mg-ATP and reduced ferredoxin to reduce ring D of protochlorophyllide (Pchlide) to form chlorophyllide a (Chlide). This reaction is light-independent. The NB-protein (BchN-BchB) is the catalytic component of the complex. The polypeptide is Light-independent protochlorophyllide reductase subunit B (Cereibacter sphaeroides (strain ATCC 17025 / ATH 2.4.3) (Rhodobacter sphaeroides)).